The sequence spans 290 residues: tRNA-cytidine(32) 2-sulfurtransferase (290 aa).

The PP-loop motif motif lies at 66 to 71 (SGGKDS). [4Fe-4S] cluster contacts are provided by Cys141, Cys144, and Cys232.

This sequence belongs to the TtcA family. As to quaternary structure, homodimer. It depends on Mg(2+) as a cofactor. The cofactor is [4Fe-4S] cluster.

The protein resides in the cytoplasm. It catalyses the reaction cytidine(32) in tRNA + S-sulfanyl-L-cysteinyl-[cysteine desulfurase] + AH2 + ATP = 2-thiocytidine(32) in tRNA + L-cysteinyl-[cysteine desulfurase] + A + AMP + diphosphate + H(+). It functions in the pathway tRNA modification. Catalyzes the ATP-dependent 2-thiolation of cytidine in position 32 of tRNA, to form 2-thiocytidine (s(2)C32). The sulfur atoms are provided by the cysteine/cysteine desulfurase (IscS) system. The chain is tRNA-cytidine(32) 2-sulfurtransferase from Rhizobium etli (strain ATCC 51251 / DSM 11541 / JCM 21823 / NBRC 15573 / CFN 42).